Here is a 94-residue protein sequence, read N- to C-terminus: Putative regulatory protein THA_332 (94 aa).

It belongs to the RemA family.

The polypeptide is Putative regulatory protein THA_332 (Thermosipho africanus (strain TCF52B)).